A 610-amino-acid chain; its full sequence is Elongation factor 4 (610 aa).

The tr-type G domain maps to 13-195 (SHIRNFSIVA…AIVRKLPAPK (183 aa)). GTP contacts are provided by residues 25-30 (DHGKST) and 142-145 (NKID).

The protein belongs to the TRAFAC class translation factor GTPase superfamily. Classic translation factor GTPase family. LepA subfamily.

It is found in the cell inner membrane. The catalysed reaction is GTP + H2O = GDP + phosphate + H(+). Required for accurate and efficient protein synthesis under certain stress conditions. May act as a fidelity factor of the translation reaction, by catalyzing a one-codon backward translocation of tRNAs on improperly translocated ribosomes. Back-translocation proceeds from a post-translocation (POST) complex to a pre-translocation (PRE) complex, thus giving elongation factor G a second chance to translocate the tRNAs correctly. Binds to ribosomes in a GTP-dependent manner. In Rhizobium etli (strain CIAT 652), this protein is Elongation factor 4.